A 500-amino-acid polypeptide reads, in one-letter code: MDSIWILSLLFFIIFLLLAAFKRKNHGKHRRIPSPPGFPIIGNLHQLGELQHQSLWKLSKKYGPVMLLKLGKVPTLILSSSETAKQALRDYDLHCCSRPSLAGGRELSYNNLDMSSSPYNEYWKELRKLCSQELFSANKIQSIQPIKDEEVKKVIDSIAESSSLKNPVNLSKTFLALTTSVVCKAAFGVSFEGSVLNSDRFNKLVRDTFEMLGSFSASDFIPYVGWIIDKFNGLQGWRKKSFRDLDAFYEQIFDLHKEEKEVGSEDLVDVLLRLEKEEIVVGNGKLTRNHIKAILMNILLGGIDTSAITMTWAMAELAKNPRVMKKVQAEIRNQIKNKERISFDDTDKLEYLKMVIKETWRLHPPTPLLLPRDVITEFEINGYTIPAKTRLHVNVWAIGRDPDTWKDPEMFLPERFNDSNIDAKGQNFELLSFGSGRRICPGLYMGTTMVEFGLANMLYHFDWKLPEGMVVEDIDMEEAPGLTVSKKSELVLVPVKYLDH.

Residues 1 to 21 form a helical membrane-spanning segment; it reads MDSIWILSLLFFIIFLLLAAF. Cys-440 is a binding site for heme.

This sequence belongs to the cytochrome P450 family. It depends on heme as a cofactor.

The protein localises to the membrane. This Arabidopsis thaliana (Mouse-ear cress) protein is Cytochrome P450 71B26 (CYP71B26).